The sequence spans 378 residues: Probable pectin lyase A (378 aa).

An N-terminal signal peptide occupies residues 1 to 18; it reads MKYQGLLAIAGCIASASA. 2 cysteine pairs are disulfide-bonded: Cys81–Cys100 and Cys90–Cys224. Asn127 carries N-linked (GlcNAc...) asparagine glycosylation. The active site involves Arg254. A disulfide bridge connects residues Cys321 and Cys329.

It belongs to the polysaccharide lyase 1 family.

Its subcellular location is the secreted. It carries out the reaction Eliminative cleavage of (1-&gt;4)-alpha-D-galacturonan methyl ester to give oligosaccharides with 4-deoxy-6-O-methyl-alpha-D-galact-4-enuronosyl groups at their non-reducing ends.. Pectinolytic enzymes consist of four classes of enzymes: pectin lyase, polygalacturonase, pectin methylesterase and rhamnogalacturonase. Among pectinolytic enzymes, pectin lyase is the most important in depolymerization of pectin, since it cleaves internal glycosidic bonds of highly methylated pectins. This chain is Probable pectin lyase A (pelA), found in Neosartorya fischeri (strain ATCC 1020 / DSM 3700 / CBS 544.65 / FGSC A1164 / JCM 1740 / NRRL 181 / WB 181) (Aspergillus fischerianus).